The following is a 103-amino-acid chain: Large ribosomal subunit protein bL21 (103 aa).

Belongs to the bacterial ribosomal protein bL21 family. As to quaternary structure, part of the 50S ribosomal subunit. Contacts protein L20.

In terms of biological role, this protein binds to 23S rRNA in the presence of protein L20. In Polynucleobacter asymbioticus (strain DSM 18221 / CIP 109841 / QLW-P1DMWA-1) (Polynucleobacter necessarius subsp. asymbioticus), this protein is Large ribosomal subunit protein bL21.